Reading from the N-terminus, the 89-residue chain is Small ribosomal subunit protein uS15 (89 aa).

The protein belongs to the universal ribosomal protein uS15 family. Part of the 30S ribosomal subunit. Forms a bridge to the 50S subunit in the 70S ribosome, contacting the 23S rRNA.

Its function is as follows. One of the primary rRNA binding proteins, it binds directly to 16S rRNA where it helps nucleate assembly of the platform of the 30S subunit by binding and bridging several RNA helices of the 16S rRNA. In terms of biological role, forms an intersubunit bridge (bridge B4) with the 23S rRNA of the 50S subunit in the ribosome. The polypeptide is Small ribosomal subunit protein uS15 (Chlorobium limicola (strain DSM 245 / NBRC 103803 / 6330)).